The following is a 246-amino-acid chain: Receptor-transporting protein 4 (246 aa).

At 1–224 the chain is on the cytoplasmic side; that stretch reads MVVDFWTWEQ…EKLGPSRDPD (224 aa). Residues 48-159 form a 3CxxC-type zinc finger; the sequence is RAFGWFRCSS…DTANCEACTL (112 aa). A helical transmembrane segment spans residues 225–245; sequence PLNICVFILLLVFIVVKCFTS.

Belongs to the TMEM7 family. In terms of assembly, interacts with TASR16. Interacts with OPRD1 and OPRM1; the interaction promotes cell surface localization of the OPDR1-OPRM1 heterodimer. (Microbial infection) Interacts with influenza A virus protein NS1; this interaction sequesters NS1 from interacting with RIG-I/DDX58 to restore antiviral signaling. Expressed in circumvallate papillae and testis.

It localises to the membrane. Its subcellular location is the cytoplasm. Its function is as follows. Chaperone protein that facilitates the trafficking and functional cell surface expression of some G-protein coupled receptors (GPCRs). Promotes functional expression of the bitter taste receptor TAS2R16. Also promotes functional expression of the opioid receptor heterodimer OPRD1-OPRM1. In addition, acts as a potent IFN-inducible suppressor of pathogens including lyssavirus rabies, influenza A or yellow fever virus. Mechanistically, associates with the viral replicase, binds viral RNA, and thereby suppresses viral genome amplification that replicates at the endoplasmic reticulum. In addition, restores antiviral signaling by interacting with and sequestering influenza A virus protein NS1. The sequence is that of Receptor-transporting protein 4 (RTP4) from Homo sapiens (Human).